The following is a 356-amino-acid chain: GDP-mannose:di-myo-inositol-1,3'-phosphate beta-1,2-mannosyltransferase (356 aa).

Belongs to the MDIP synthase family. Mg(2+) is required as a cofactor.

The catalysed reaction is bis(myo-inositol) 1,3'-phosphate + GDP-alpha-D-mannose = 2-O-(beta-D-mannosyl)-bis(myo-inositol) 1,3'-phosphate + GDP + H(+). It catalyses the reaction 2-O-(beta-D-mannosyl)-bis(myo-inositol) 1,3'-phosphate + GDP-alpha-D-mannose = 2-O-(beta-D-mannosyl-(1-&gt;2)-beta-D-mannosyl)-bis(myo-inositol) 1,3'-phosphate + GDP + H(+). The enzyme catalyses bis(myo-inositol) 1,3'-phosphate + 2 GDP-alpha-D-mannose = 2-O-(beta-D-mannosyl-(1-&gt;2)-beta-D-mannosyl)-bis(myo-inositol) 1,3'-phosphate + 2 GDP + 2 H(+). In terms of biological role, catalyzes the transfer of the mannosyl group from GDP-mannose to di-myo-inositol-1,3'-phosphate (DIP), producing mannosyl-di-myo-inositol phosphate (MDIP). Can also use MDIP as an acceptor of a second mannose residue, yielding di-mannosyl-di-myo-inositol phosphate (MMDIP). This chain is GDP-mannose:di-myo-inositol-1,3'-phosphate beta-1,2-mannosyltransferase, found in Aquifex aeolicus (strain VF5).